Here is a 372-residue protein sequence, read N- to C-terminus: Anhydro-N-acetylmuramic acid kinase (372 aa).

13–20 provides a ligand contact to ATP; that stretch reads GTSMDGID.

This sequence belongs to the anhydro-N-acetylmuramic acid kinase family.

It catalyses the reaction 1,6-anhydro-N-acetyl-beta-muramate + ATP + H2O = N-acetyl-D-muramate 6-phosphate + ADP + H(+). It functions in the pathway amino-sugar metabolism; 1,6-anhydro-N-acetylmuramate degradation. Its pathway is cell wall biogenesis; peptidoglycan recycling. Catalyzes the specific phosphorylation of 1,6-anhydro-N-acetylmuramic acid (anhMurNAc) with the simultaneous cleavage of the 1,6-anhydro ring, generating MurNAc-6-P. Is required for the utilization of anhMurNAc either imported from the medium or derived from its own cell wall murein, and thus plays a role in cell wall recycling. In Rhizobium johnstonii (strain DSM 114642 / LMG 32736 / 3841) (Rhizobium leguminosarum bv. viciae), this protein is Anhydro-N-acetylmuramic acid kinase.